Consider the following 120-residue polypeptide: uncharacterized protein (120 aa).

An N-terminal signal peptide occupies residues 1–22 (MSTSGMLFIFATFCPCFLSCCA). Topologically, residues 23–59 (FMSHWKLKDFSFRFLRMCGERSLVVCYPLKLLKQIRS) are extracellular. The chain crosses the membrane as a helical span at residues 60 to 80 (LFSIAIGHLSLMLIEGSANLL). The Cytoplasmic segment spans residues 81–120 (SLEEISRTLLRILDFVGNKNMRTYLEVPLCRWHISQARPN).

It localises to the membrane. This is an uncharacterized protein from Schizosaccharomyces pombe (strain 972 / ATCC 24843) (Fission yeast).